A 443-amino-acid chain; its full sequence is Cyclin-A2-1 (443 aa).

Over residues Met-1–Asn-10 the composition is skewed to basic residues. The tract at residues Met-1–Arg-61 is disordered. A compositionally biased stretch (basic and acidic residues) spans Ala-11–Asn-25.

It belongs to the cyclin family. Cyclin AB subfamily. As to expression, expressed in tissues with active cell division: apical root and shoot meristems, lateral root and leaf primordia, floral meristems and developing pollen.

May negatively regulate endocycles and act as a regulator of ploidy levels in endoreduplication. This chain is Cyclin-A2-1 (CYCA2-1), found in Arabidopsis thaliana (Mouse-ear cress).